Reading from the N-terminus, the 453-residue chain is Dibenzothiophene-sulfone monooxygenase (453 aa).

Positions 59, 106, 156, 160, and 231 each coordinate FMN.

It belongs to the NtaA/SnaA/DszA monooxygenase family. In terms of assembly, homodimer.

The protein localises to the cytoplasm. The catalysed reaction is dibenzothiophene 5,5-dioxide + FMNH2 + NADH + O2 = 2'-hydroxybiphenyl-2-sulfinate + FMN + NAD(+) + H2O + H(+). It participates in sulfur metabolism; dibenzothiophene degradation. Catalyzes the second step of the '4S' desulfurization pathway that removes covalently bound sulfur from dibenzothiophene (DBT) without breaking carbon-carbon bonds. Metabolizes DBT-sulfone (DBTO2 or DBT 5,5-dioxide) to 2-(2'-hydroxyphenyl)benzene sulphinate (HBPS). This is Dibenzothiophene-sulfone monooxygenase from Rhodococcus erythropolis (Arthrobacter picolinophilus).